Here is a 349-residue protein sequence, read N- to C-terminus: MAFKIASSPHVTRNLHTSTVMQRVILCLLPGLVVQCAFFGWGTLVQVLLAILVALSCEAAVMKLRNRNIKASLSDNSAMLTAILIGVAIPPLAPWWMIVMGTAFAIVIVKHLYGGLGHNLFNPAMAAYVLLLVSFPVQMTTWIAPSTVALHSPSLVESLQLIFNVGAHVNMEQFRLGIDGMTMATPLDTLKTDLSMGLTTTESLTKAIFDGSTGVGWFWVNLAYLAGGLVLLKLKAIRWHISTGVLLGLFVASSIGFLLSPDTQASPLMHLFSGATMLAAFFIATDPVTAATSPRGRIIFGALIGVLVYIIRTKGGYPDAFAFAVLLANLCAPFIDYYVRPRTYGHSTS.

3 consecutive transmembrane segments (helical) span residues 20 to 42, 77 to 99, and 124 to 144; these read VMQR…FGWG, SAML…WMIV, and AMAA…TWIA. Threonine 185 carries the FMN phosphoryl threonine modification. 5 helical membrane-spanning segments follow: residues 212–232, 239–259, 265–285, 291–311, and 315–335; these read STGV…LVLL, WHIS…GFLL, ASPL…FIAT, ATSP…VYII, and GGYP…APFI.

This sequence belongs to the NqrB/RnfD family. As to quaternary structure, the complex is composed of six subunits: RnfA, RnfB, RnfC, RnfD, RnfE and RnfG. Requires FMN as cofactor.

The protein localises to the cell inner membrane. Part of a membrane-bound complex that couples electron transfer with translocation of ions across the membrane. In Shewanella baltica (strain OS195), this protein is Ion-translocating oxidoreductase complex subunit D.